A 122-amino-acid polypeptide reads, in one-letter code: Large ribosomal subunit protein uL18 (122 aa).

Positions 1-25 are disordered; it reads MSTLSRKQQTQKRHRRLRRHLSGTA. Basic residues predominate over residues 9 to 21; sequence QTQKRHRRLRRHL.

Belongs to the universal ribosomal protein uL18 family. In terms of assembly, part of the 50S ribosomal subunit; part of the 5S rRNA/L5/L18/L25 subcomplex. Contacts the 5S and 23S rRNAs.

Its function is as follows. This is one of the proteins that bind and probably mediate the attachment of the 5S RNA into the large ribosomal subunit, where it forms part of the central protuberance. This is Large ribosomal subunit protein uL18 from Synechococcus sp. (strain CC9311).